A 534-amino-acid chain; its full sequence is Probable alanine aminotransferase, mitochondrial (534 aa).

A mitochondrion-targeting transit peptide spans 1–18; sequence MFKRSLKVLLSNPPINRV. Lys-352 carries the N6-(pyridoxal phosphate)lysine modification.

This sequence belongs to the class-I pyridoxal-phosphate-dependent aminotransferase family. Alanine aminotransferase subfamily. Homodimer. Requires pyridoxal 5'-phosphate as cofactor.

The protein localises to the mitochondrion matrix. It carries out the reaction L-alanine + 2-oxoglutarate = pyruvate + L-glutamate. Its pathway is amino-acid degradation; L-alanine degradation via transaminase pathway; pyruvate from L-alanine: step 1/1. The protein is Probable alanine aminotransferase, mitochondrial (gpt) of Dictyostelium discoideum (Social amoeba).